Reading from the N-terminus, the 292-residue chain is RNA 5'-monophosphate methyltransferase (292 aa).

Positions 1–21 (MAVPTELDGGSVKETAAEEES) are disordered. S-adenosyl-L-methionine contacts are provided by residues arginine 46, asparagine 76, aspartate 110, 135 to 136 (DF), and methionine 164. A Bin3-type SAM domain is found at 53-274 (ELLRQLFPES…KQTIETHPIP (222 aa)).

It belongs to the methyltransferase superfamily. In terms of assembly, interacts with DICER1; the interaction may be mediated by RNA.

Its subcellular location is the cytoplasm. The catalysed reaction is a 5'-end 5'-phospho-ribonucleoside-RNA + S-adenosyl-L-methionine = a 5'-end (5'-methylphospho)-ribonucleoside-RNA + S-adenosyl-L-homocysteine. It carries out the reaction a 5'-end 5'-phospho-ribonucleoside-RNA + 2 S-adenosyl-L-methionine = a 5'-end (5'-bismethylphospho)-ribonucleoside-RNA + 2 S-adenosyl-L-homocysteine. Functionally, O-methyltransferase that specifically monomethylates 5'-monophosphate of cytoplasmic histidyl tRNA (tRNA(His)), acting as a capping enzyme by protecting tRNA(His) from cleavage by DICER1. Also able, with less efficiently, to methylate the 5' monophosphate of a subset of pre-miRNAs, acting as a negative regulator of miRNA processing. The 5' monophosphate of pre-miRNAs is recognized by DICER1 and is required for pre-miRNAs processing: methylation at this position reduces the processing of pre-miRNAs by DICER1. Was also reported to mediate dimethylation of pre-miR-145; however dimethylation cannot be reproduced by another group which observes a monomethylation of pre-miR-145. In Homo sapiens (Human), this protein is RNA 5'-monophosphate methyltransferase.